The chain runs to 422 residues: UDP-N-acetylglucosamine 1-carboxyvinyltransferase (422 aa).

Phosphoenolpyruvate is bound at residue lysine 22–asparagine 23. Arginine 95 serves as a coordination point for UDP-N-acetyl-alpha-D-glucosamine. Catalysis depends on cysteine 119, which acts as the Proton donor. Cysteine 119 carries the post-translational modification 2-(S-cysteinyl)pyruvic acid O-phosphothioketal. UDP-N-acetyl-alpha-D-glucosamine is bound by residues arginine 124–glutamine 128, aspartate 309, and valine 331.

The protein belongs to the EPSP synthase family. MurA subfamily.

The protein localises to the cytoplasm. The enzyme catalyses phosphoenolpyruvate + UDP-N-acetyl-alpha-D-glucosamine = UDP-N-acetyl-3-O-(1-carboxyvinyl)-alpha-D-glucosamine + phosphate. The protein operates within cell wall biogenesis; peptidoglycan biosynthesis. Functionally, cell wall formation. Adds enolpyruvyl to UDP-N-acetylglucosamine. This Anaeromyxobacter dehalogenans (strain 2CP-C) protein is UDP-N-acetylglucosamine 1-carboxyvinyltransferase.